Reading from the N-terminus, the 1474-residue chain is Adhesion G protein-coupled receptor L1 (1474 aa).

The first 24 residues, 1-24, serve as a signal peptide directing secretion; it reads MARLAAVLWNLCVTAVLVTSATQG. Topologically, residues 25 to 858 are extracellular; that stretch reads LSRAGLPFGL…EIYQGRINEL (834 aa). The 90-residue stretch at 40 to 129 folds into the SUEL-type lectin domain; the sequence is ACEGYPIELR…KYLEVQYDCV (90 aa). Intrachain disulfides connect cysteine 41/cysteine 71, cysteine 50/cysteine 128, cysteine 83/cysteine 115, cysteine 96/cysteine 102, and cysteine 140/cysteine 322. Glutamate 42 serves as a coordination point for alpha-L-rhamnose. An N-linked (GlcNAc...) asparagine glycan is attached at asparagine 98. 117–120 provides a ligand contact to alpha-L-rhamnose; it reads GTYK. Residues 139–398 form the Olfactomedin-like domain; that stretch reads VCPGTLQKVL…VVRYSLEFGP (260 aa). Positions 400-434 are disordered; sequence DPSAGPATSPPLSTTTTARPTPLTSTASPAATTPL. A compositionally biased stretch (low complexity) spans 405-434; that stretch reads PATSPPLSTTTTARPTPLTSTASPAATTPL. Disulfide bonds link cysteine 480–cysteine 515 and cysteine 503–cysteine 532. Residues asparagine 531, asparagine 640, asparagine 742, asparagine 801, asparagine 806, and asparagine 827 are each glycosylated (N-linked (GlcNAc...) asparagine). The region spanning 669–851 is the GAIN-B domain; that stretch reads PARFLAAKEN…AVLMAHREIY (183 aa). 2 disulfide bridges follow: cysteine 802–cysteine 833 and cysteine 821–cysteine 835. The interval 802-851 is GPS; sequence CSFWNYSERSMLGYWSTQGCRLVESNKTHTTCACSHLTNFAVLMAHREIY. A helical membrane pass occupies residues 859-879; sequence LLSVITWVGIVISLVCLAICI. Over 880–893 the chain is Cytoplasmic; the sequence is STFCFLRGLQTDRN. The chain crosses the membrane as a helical span at residues 894–914; that stretch reads TIHKNLCINLFLAELLFLVGI. The Extracellular segment spans residues 915–920; it reads DKTQYE. Residues 921 to 941 traverse the membrane as a helical segment; sequence IACPIFAGLLHYFFLAAFSWL. Over 942–964 the chain is Cytoplasmic; sequence CLEGVHLYLLLVEVFESEYSRTK. The chain crosses the membrane as a helical span at residues 965-985; sequence YYYLGGYCFPALVVGIAAAID. The Extracellular portion of the chain corresponds to 986 to 1002; the sequence is YRSYGTEKACWLRVDNY. A helical transmembrane segment spans residues 1003–1023; that stretch reads FIWSFIGPVSFVIVVNLVFLM. The Cytoplasmic portion of the chain corresponds to 1024 to 1050; it reads VTLHKMIRSSSVLKPDSSRLDNIKSWA. Residues 1051-1071 form a helical membrane-spanning segment; the sequence is LGAIALLFLLGLTWAFGLLFI. Residues 1072-1075 are Extracellular-facing; the sequence is NKES. A helical transmembrane segment spans residues 1076-1096; sequence VVMAYLFTTFNAFQGVFIFVF. Topologically, residues 1097–1474 are cytoplasmic; it reads HCALQKKVHK…DGQMQLVTSL (378 aa). The residue at position 1194 (arginine 1194) is an Omega-N-methylarginine. Residue serine 1220 is modified to Phosphoserine. Disordered regions lie at residues 1248-1273, 1294-1328, 1360-1429, and 1451-1474; these read FNNS…RGRN, RGSS…PGGA, ESES…SRPP, and YLAA…VTSL. Composition is skewed to pro residues over residues 1302 to 1314 and 1408 to 1420; these read GPPP…PPVP and ALPP…PGPP. Serine 1473 is modified (phosphoserine).

Belongs to the G-protein coupled receptor 2 family. Adhesion G-protein coupled receptor (ADGR) subfamily. In terms of assembly, forms a heterodimer, consisting of a large extracellular region (p120) non-covalently linked to a seven-transmembrane moiety (p85). Interacts with syntaxin and with proteins of the SHANK family via the PDZ domain. Interacts (via extracellular domain) with FLRT1, FLRT2 and FLRT3 (via extracellular domain). Post-translationally, autoproteolytically cleaved into 2 subunits, an extracellular subunit and a seven-transmembrane subunit. This proteolytic processing takes place early in the biosynthetic pathway, either in the endoplasmic reticulum or in the early compartment of the Golgi apparatus.

The protein resides in the cell membrane. Its subcellular location is the cell projection. It localises to the axon. The protein localises to the growth cone. It is found in the synapse. The protein resides in the presynaptic cell membrane. Its subcellular location is the synaptosome. In terms of biological role, calcium-independent receptor of high affinity for alpha-latrotoxin, an excitatory neurotoxin present in black widow spider venom which triggers massive exocytosis from neurons and neuroendocrine cells. Receptor for TENM2 that mediates heterophilic synaptic cell-cell contact and postsynaptic specialization. Receptor probably implicated in the regulation of exocytosis. This Homo sapiens (Human) protein is Adhesion G protein-coupled receptor L1.